Reading from the N-terminus, the 90-residue chain is Auxin-responsive protein SAUR24 (90 aa).

This sequence belongs to the ARG7 family.

The protein resides in the cell membrane. Functionally, functions as a positive effector of cell expansion through modulation of auxin transport. In Arabidopsis thaliana (Mouse-ear cress), this protein is Auxin-responsive protein SAUR24.